Consider the following 639-residue polypeptide: Chaperone protein HtpG (639 aa).

Positions 1-348 are a; substrate-binding; sequence MAQYEFQTEV…SEDLPLNVSR (348 aa). Residues 349-565 form a b region; that stretch reads EILQQNRVLA…ENDPTVQMER (217 aa). The c stretch occupies residues 566-639; sequence LMRATGQTHK…KRVNRLLARG (74 aa).

This sequence belongs to the heat shock protein 90 family. As to quaternary structure, homodimer.

It is found in the cytoplasm. Molecular chaperone. Has ATPase activity. This chain is Chaperone protein HtpG, found in Treponema pallidum (strain Nichols).